The chain runs to 32 residues: Enolase (32 aa).

Belongs to the enolase family. Homodimer. Requires Mg(2+) as cofactor.

The protein resides in the cytoplasm. It carries out the reaction (2R)-2-phosphoglycerate = phosphoenolpyruvate + H2O. Its pathway is carbohydrate degradation; glycolysis; pyruvate from D-glyceraldehyde 3-phosphate: step 4/5. The polypeptide is Enolase (Imperata cylindrica (Cogon grass)).